A 77-amino-acid polypeptide reads, in one-letter code: uncharacterized protein (77 aa).

In terms of domain architecture, HTH cro/C1-type spans 11–65 (FARLRREKGLTQEEVEARSGFSQQYLSSLERGRRNPTVITLYELAQALGVSHVEL). The segment at residues 22–41 (QEEVEARSGFSQQYLSSLER) is a DNA-binding region (H-T-H motif).

This is an uncharacterized protein from Sinorhizobium fredii (strain NBRC 101917 / NGR234).